Reading from the N-terminus, the 154-residue chain is Yop proteins translocation protein O (154 aa).

The tract at residues Glu132–Ala154 is disordered.

Belongs to the SpaM family.

Functionally, component of the yop secretion machinery. This Yersinia pseudotuberculosis serotype I (strain IP32953) protein is Yop proteins translocation protein O (yscO).